Reading from the N-terminus, the 332-residue chain is UDP-3-O-acylglucosamine N-acyltransferase (332 aa).

His-235 acts as the Proton acceptor in catalysis.

It belongs to the transferase hexapeptide repeat family. LpxD subfamily. Homotrimer.

It carries out the reaction a UDP-3-O-[(3R)-3-hydroxyacyl]-alpha-D-glucosamine + a (3R)-hydroxyacyl-[ACP] = a UDP-2-N,3-O-bis[(3R)-3-hydroxyacyl]-alpha-D-glucosamine + holo-[ACP] + H(+). It participates in bacterial outer membrane biogenesis; LPS lipid A biosynthesis. In terms of biological role, catalyzes the N-acylation of UDP-3-O-acylglucosamine using 3-hydroxyacyl-ACP as the acyl donor. Is involved in the biosynthesis of lipid A, a phosphorylated glycolipid that anchors the lipopolysaccharide to the outer membrane of the cell. This Fusobacterium nucleatum subsp. nucleatum (strain ATCC 25586 / DSM 15643 / BCRC 10681 / CIP 101130 / JCM 8532 / KCTC 2640 / LMG 13131 / VPI 4355) protein is UDP-3-O-acylglucosamine N-acyltransferase.